Consider the following 602-residue polypeptide: 4-hydroxy-3-methylbut-2-en-1-yl diphosphate synthase (flavodoxin) (602 aa).

Positions 508, 511, 543, and 550 each coordinate [4Fe-4S] cluster.

Belongs to the IspG family. The cofactor is [4Fe-4S] cluster.

The catalysed reaction is (2E)-4-hydroxy-3-methylbut-2-enyl diphosphate + oxidized [flavodoxin] + H2O + 2 H(+) = 2-C-methyl-D-erythritol 2,4-cyclic diphosphate + reduced [flavodoxin]. It functions in the pathway isoprenoid biosynthesis; isopentenyl diphosphate biosynthesis via DXP pathway; isopentenyl diphosphate from 1-deoxy-D-xylulose 5-phosphate: step 5/6. Its function is as follows. Converts 2C-methyl-D-erythritol 2,4-cyclodiphosphate (ME-2,4cPP) into 1-hydroxy-2-methyl-2-(E)-butenyl 4-diphosphate. The chain is 4-hydroxy-3-methylbut-2-en-1-yl diphosphate synthase (flavodoxin) from Chlamydia trachomatis serovar L2b (strain UCH-1/proctitis).